The chain runs to 426 residues: Endothelin-1 receptor (426 aa).

The N-terminal stretch at 1-20 (MGVLCFLASFWLALVGGAIA) is a signal peptide. Over 21-80 (DNAERYSANLSSHVEDFTPFPGTEFNFLGTTLQPPNLALPSNGSMHGYCPQQTKITTAFK) the chain is Extracellular. N-linked (GlcNAc...) asparagine glycans are attached at residues asparagine 29 and asparagine 62. Residues 81 to 102 (YINTVISCTIFIVGMVGNATLL) form a helical membrane-spanning segment. Residues 103 to 112 (RIIYQNKCMR) lie on the Cytoplasmic side of the membrane. The helical transmembrane segment at 113 to 132 (NGPNALIASLALGDLIYVVI) threads the bilayer. The Extracellular segment spans residues 133–159 (DLPINVFKLLAGRWPFDHNDFGVFLCK). The cysteines at positions 158 and 239 are disulfide-linked. A helical membrane pass occupies residues 160-181 (LFPFLQKSSVGITVLNLCALSV). Residues 182-205 (DRYRAVASWSRVQGIGIPLITAIE) are Cytoplasmic-facing. A helical membrane pass occupies residues 206-229 (IVSIWILSFILAIPEAIGFVMVPF). The Extracellular portion of the chain corresponds to 230–256 (EYKGEQHRTCMLNATTKFMEFYQDVKD). The chain crosses the membrane as a helical span at residues 257–278 (WWLFGFYFCMPLVCTAIFYTLM). Over 279–306 (TCEMLNRRNGSLRIALSEHLKQRREVAK) the chain is Cytoplasmic. The chain crosses the membrane as a helical span at residues 307–328 (TVFCLVVIFALCWFPLHLSRIL). The Extracellular segment spans residues 329 to 347 (KKTVYDEMDKNRCELLSFL). A helical transmembrane segment spans residues 348–372 (LLMDYIGINLATMNSCINPIALYFV). Residues 373–426 (SKKFKNCFQSCLCCCCHQSKSLMTSVPMNGTSIQWKNQEQNHNTERSSHKDSMN) are Cytoplasmic-facing. Serine 424 is modified (phosphoserine).

The protein belongs to the G-protein coupled receptor 1 family. Endothelin receptor subfamily. EDNRA sub-subfamily. As to quaternary structure, interacts with HDAC7 and KAT5. In terms of tissue distribution, predominantly expressed in vascular smooth muscle cells of a variety of issues, bronchial smooth muscle cells, myocardium, and the pituitary gland.

Its subcellular location is the cell membrane. Its function is as follows. Receptor for endothelin-1. Mediates its action by association with G proteins that activate a phosphatidylinositol-calcium second messenger system. The rank order of binding affinities for ET-A is: ET1 &gt; ET2 &gt;&gt; ET3. This is Endothelin-1 receptor from Rattus norvegicus (Rat).